Reading from the N-terminus, the 151-residue chain is Ubiquitin-conjugating enzyme E2 2 (151 aa).

A UBC core domain is found at 4 to 150 (AARRRLMRDF…VRETVERSWE (147 aa)). Cys88 (glycyl thioester intermediate) is an active-site residue.

Belongs to the ubiquitin-conjugating enzyme family.

It localises to the cytoplasm. Its subcellular location is the nucleus. The enzyme catalyses S-ubiquitinyl-[E1 ubiquitin-activating enzyme]-L-cysteine + [E2 ubiquitin-conjugating enzyme]-L-cysteine = [E1 ubiquitin-activating enzyme]-L-cysteine + S-ubiquitinyl-[E2 ubiquitin-conjugating enzyme]-L-cysteine.. The protein operates within protein modification; protein ubiquitination. Catalyzes the covalent attachment of ubiquitin to other proteins. Plays a role in transcription regulation by catalyzing the monoubiquitination of histone H2B to form H2BK123ub1. H2BK123ub1 gives a specific tag for epigenetic transcriptional activation and is also a prerequisite for H3K4me and H3K79me formation. Also involved in postreplication repair of UV-damaged DNA, in N-end rule-dependent protein degradation and in sporulation. This Trichoderma harzianum (Hypocrea lixii) protein is Ubiquitin-conjugating enzyme E2 2 (UBC2).